A 371-amino-acid chain; its full sequence is Beta sliding clamp (371 aa).

Belongs to the beta sliding clamp family. As to quaternary structure, forms a ring-shaped head-to-tail homodimer around DNA which binds and tethers DNA polymerases and other proteins to the DNA. The DNA replisome complex has a single clamp-loading complex (3 tau and 1 each of delta, delta', psi and chi subunits) which binds 3 Pol III cores (1 core on the leading strand and 2 on the lagging strand) each with a beta sliding clamp dimer. Additional proteins in the replisome are other copies of gamma, psi and chi, Ssb, DNA helicase and RNA primase.

It is found in the cytoplasm. Functionally, confers DNA tethering and processivity to DNA polymerases and other proteins. Acts as a clamp, forming a ring around DNA (a reaction catalyzed by the clamp-loading complex) which diffuses in an ATP-independent manner freely and bidirectionally along dsDNA. Initially characterized for its ability to contact the catalytic subunit of DNA polymerase III (Pol III), a complex, multichain enzyme responsible for most of the replicative synthesis in bacteria; Pol III exhibits 3'-5' exonuclease proofreading activity. The beta chain is required for initiation of replication as well as for processivity of DNA replication. This Treponema pallidum (strain Nichols) protein is Beta sliding clamp (dnaN).